Here is a 344-residue protein sequence, read N- to C-terminus: Dihydroorotase (344 aa).

Histidine 13 and histidine 15 together coordinate Zn(2+). Substrate-binding positions include 15-17 (HLR) and asparagine 41. The Zn(2+) site is built by lysine 98, histidine 135, and histidine 173. Lysine 98 bears the N6-carboxylysine mark. Histidine 135 is a substrate binding site. Leucine 218 contacts substrate. A Zn(2+)-binding site is contributed by aspartate 247. Aspartate 247 is an active-site residue. Residues histidine 251 and alanine 263 each contribute to the substrate site.

Belongs to the metallo-dependent hydrolases superfamily. DHOase family. Class II DHOase subfamily. Homodimer. It depends on Zn(2+) as a cofactor.

It catalyses the reaction (S)-dihydroorotate + H2O = N-carbamoyl-L-aspartate + H(+). The protein operates within pyrimidine metabolism; UMP biosynthesis via de novo pathway; (S)-dihydroorotate from bicarbonate: step 3/3. Its function is as follows. Catalyzes the reversible cyclization of carbamoyl aspartate to dihydroorotate. The sequence is that of Dihydroorotase from Neisseria meningitidis serogroup C (strain 053442).